The following is a 708-amino-acid chain: Fatty acid oxidation complex subunit alpha (708 aa).

The interval 1–191 (MDNNNAFQLS…KLGVVDACVP (191 aa)) is enoyl-CoA hydratase. Positions 311–708 (APVAAVGVLG…RAGLGEKFYP (398 aa)) are 3-hydroxyacyl-CoA dehydrogenase.

It in the N-terminal section; belongs to the enoyl-CoA hydratase/isomerase family. This sequence in the central section; belongs to the 3-hydroxyacyl-CoA dehydrogenase family. As to quaternary structure, heterotetramer of two alpha chains (FadJ) and two beta chains (FadI).

It is found in the cytoplasm. It carries out the reaction a (3S)-3-hydroxyacyl-CoA = a (2E)-enoyl-CoA + H2O. The catalysed reaction is a 4-saturated-(3S)-3-hydroxyacyl-CoA = a (3E)-enoyl-CoA + H2O. It catalyses the reaction a (3S)-3-hydroxyacyl-CoA + NAD(+) = a 3-oxoacyl-CoA + NADH + H(+). The enzyme catalyses (3S)-3-hydroxybutanoyl-CoA = (3R)-3-hydroxybutanoyl-CoA. Its pathway is lipid metabolism; fatty acid beta-oxidation. Functionally, catalyzes the formation of a hydroxyacyl-CoA by addition of water on enoyl-CoA. Also exhibits 3-hydroxyacyl-CoA epimerase and 3-hydroxyacyl-CoA dehydrogenase activities. The protein is Fatty acid oxidation complex subunit alpha of Vibrio cholerae serotype O1 (strain ATCC 39315 / El Tor Inaba N16961).